The primary structure comprises 373 residues: Cobalt-precorrin-5B C(1)-methyltransferase (373 aa).

Belongs to the CbiD family.

It catalyses the reaction Co-precorrin-5B + S-adenosyl-L-methionine = Co-precorrin-6A + S-adenosyl-L-homocysteine. It participates in cofactor biosynthesis; adenosylcobalamin biosynthesis; cob(II)yrinate a,c-diamide from sirohydrochlorin (anaerobic route): step 6/10. Its function is as follows. Catalyzes the methylation of C-1 in cobalt-precorrin-5B to form cobalt-precorrin-6A. The sequence is that of Cobalt-precorrin-5B C(1)-methyltransferase from Listeria monocytogenes serotype 4b (strain CLIP80459).